The primary structure comprises 251 residues: Small ribosomal subunit protein uS2 (251 aa).

This sequence belongs to the universal ribosomal protein uS2 family.

This is Small ribosomal subunit protein uS2 from Azoarcus sp. (strain BH72).